The primary structure comprises 234 residues: 1-(5-phosphoribosyl)-5-[(5-phosphoribosylamino)methylideneamino] imidazole-4-carboxamide isomerase (234 aa).

The Proton acceptor role is filled by aspartate 9. The active-site Proton donor is the aspartate 131.

Belongs to the HisA/HisF family.

Its subcellular location is the cytoplasm. It carries out the reaction 1-(5-phospho-beta-D-ribosyl)-5-[(5-phospho-beta-D-ribosylamino)methylideneamino]imidazole-4-carboxamide = 5-[(5-phospho-1-deoxy-D-ribulos-1-ylimino)methylamino]-1-(5-phospho-beta-D-ribosyl)imidazole-4-carboxamide. It participates in amino-acid biosynthesis; L-histidine biosynthesis; L-histidine from 5-phospho-alpha-D-ribose 1-diphosphate: step 4/9. The sequence is that of 1-(5-phosphoribosyl)-5-[(5-phosphoribosylamino)methylideneamino] imidazole-4-carboxamide isomerase from Staphylococcus carnosus (strain TM300).